A 535-amino-acid chain; its full sequence is CTP synthase (535 aa).

Residues 1–267 (MTKYIFVTGG…DQIVCDHLKL (267 aa)) form an amidoligase domain region. Residue serine 13 coordinates CTP. Residue serine 13 coordinates UTP. 14–19 (SLGKGI) provides a ligand contact to ATP. Tyrosine 54 lines the L-glutamine pocket. Aspartate 71 lines the ATP pocket. Mg(2+) contacts are provided by aspartate 71 and glutamate 141. CTP-binding positions include 148 to 150 (DIE), 188 to 193 (KTKPTQ), and lysine 224. UTP is bound by residues 188–193 (KTKPTQ) and lysine 224. 240 to 242 (RDA) is a binding site for ATP. Residues 292 to 534 (KIALVGKYVE…VKASLTNKES (243 aa)) form the Glutamine amidotransferase type-1 domain. Glycine 354 provides a ligand contact to L-glutamine. Catalysis depends on cysteine 381, which acts as the Nucleophile; for glutamine hydrolysis. L-glutamine-binding positions include 382–385 (LGMQ), glutamate 405, and arginine 462. Residues histidine 507 and glutamate 509 contribute to the active site.

It belongs to the CTP synthase family. In terms of assembly, homotetramer.

The catalysed reaction is UTP + L-glutamine + ATP + H2O = CTP + L-glutamate + ADP + phosphate + 2 H(+). It carries out the reaction L-glutamine + H2O = L-glutamate + NH4(+). It catalyses the reaction UTP + NH4(+) + ATP = CTP + ADP + phosphate + 2 H(+). The protein operates within pyrimidine metabolism; CTP biosynthesis via de novo pathway; CTP from UDP: step 2/2. Allosterically activated by GTP, when glutamine is the substrate; GTP has no effect on the reaction when ammonia is the substrate. The allosteric effector GTP functions by stabilizing the protein conformation that binds the tetrahedral intermediate(s) formed during glutamine hydrolysis. Inhibited by the product CTP, via allosteric rather than competitive inhibition. In terms of biological role, catalyzes the ATP-dependent amination of UTP to CTP with either L-glutamine or ammonia as the source of nitrogen. Regulates intracellular CTP levels through interactions with the four ribonucleotide triphosphates. This Bacillus anthracis (strain A0248) protein is CTP synthase.